The following is a 281-amino-acid chain: 2,3,4,5-tetrahydropyridine-2,6-dicarboxylate N-succinyltransferase (281 aa).

Arg108 and Asp145 together coordinate substrate.

Belongs to the transferase hexapeptide repeat family. In terms of assembly, homotrimer.

It localises to the cytoplasm. The catalysed reaction is (S)-2,3,4,5-tetrahydrodipicolinate + succinyl-CoA + H2O = (S)-2-succinylamino-6-oxoheptanedioate + CoA. It participates in amino-acid biosynthesis; L-lysine biosynthesis via DAP pathway; LL-2,6-diaminopimelate from (S)-tetrahydrodipicolinate (succinylase route): step 1/3. This is 2,3,4,5-tetrahydropyridine-2,6-dicarboxylate N-succinyltransferase from Rhodopseudomonas palustris (strain BisA53).